A 301-amino-acid polypeptide reads, in one-letter code: Formamidopyrimidine-DNA glycosylase (301 aa).

Proline 2 functions as the Schiff-base intermediate with DNA in the catalytic mechanism. Glutamate 3 (proton donor) is an active-site residue. Lysine 58 functions as the Proton donor; for beta-elimination activity in the catalytic mechanism. DNA contacts are provided by histidine 109, arginine 131, and lysine 174. The FPG-type zinc-finger motif lies at serine 265–lysine 301. The active-site Proton donor; for delta-elimination activity is the arginine 291.

The protein belongs to the FPG family. As to quaternary structure, monomer. It depends on Zn(2+) as a cofactor.

The catalysed reaction is Hydrolysis of DNA containing ring-opened 7-methylguanine residues, releasing 2,6-diamino-4-hydroxy-5-(N-methyl)formamidopyrimidine.. It carries out the reaction 2'-deoxyribonucleotide-(2'-deoxyribose 5'-phosphate)-2'-deoxyribonucleotide-DNA = a 3'-end 2'-deoxyribonucleotide-(2,3-dehydro-2,3-deoxyribose 5'-phosphate)-DNA + a 5'-end 5'-phospho-2'-deoxyribonucleoside-DNA + H(+). Functionally, involved in base excision repair of DNA damaged by oxidation or by mutagenic agents. Acts as a DNA glycosylase that recognizes and removes damaged bases. Has a preference for oxidized purines, such as 7,8-dihydro-8-oxoguanine (8-oxoG). Has AP (apurinic/apyrimidinic) lyase activity and introduces nicks in the DNA strand. Cleaves the DNA backbone by beta-delta elimination to generate a single-strand break at the site of the removed base with both 3'- and 5'-phosphates. The chain is Formamidopyrimidine-DNA glycosylase from Rhizobium leguminosarum bv. trifolii (strain WSM2304).